The primary structure comprises 254 residues: Allene oxide cyclase 1, chloroplastic (254 aa).

A chloroplast-targeting transit peptide spans 1–78; the sequence is MASSTISLQS…QNLGNTENPR (78 aa). A compositionally biased stretch (low complexity) spans 44-56; sequence SNGPGSSSPTSFT. The disordered stretch occupies residues 44-79; that stretch reads SNGPGSSSPTSFTPKKKLTPTRALSQNLGNTENPRP. Polar residues predominate over residues 65 to 77; that stretch reads RALSQNLGNTENP.

It belongs to the allene oxide cyclase family. In terms of tissue distribution, highly expressed in fully developed leaves.

Its subcellular location is the plastid. The protein localises to the chloroplast. It carries out the reaction (9Z,13S,15Z)-12,13-epoxyoctadeca-9,11,15-trienoate = (9S,13S,15Z)-12-oxophyto-10,15-dienoate. Its function is as follows. Involved in the production of 12-oxo-phytodienoic acid (OPDA), a precursor of jasmonic acid. The chain is Allene oxide cyclase 1, chloroplastic (AOC1) from Arabidopsis thaliana (Mouse-ear cress).